Reading from the N-terminus, the 619-residue chain is Probable transporter mch1 (619 aa).

12 consecutive transmembrane segments (helical) span residues 88–108 (VISCLGAGSITAFSLYGPLFL), 120–140 (AVSIAAEISMYLPVPLFGYLC), 147–167 (PLALLSGLVFGGGYLLAAFAY), 184–204 (VMVVAFVAIGTATSCMYLAAV), 219–239 (IMLAVPIAGFGLSGMWQSQVA), 261–281 (FLFLALFLFCLGVIGTFGLRI), 377–397 (TMWWLAVGFFLVTGPGEAYIN), 428–448 (IIALTSTIARLLTGSLSDFFA), 480–500 (LAFLLPSALLLSLGYLLLSSP), 515–535 (LIGLGYGSAFSLVPIIISVVW), 541–561 (GTNWGIVAMVPAAGAAMWGVI), and 589–609 (FWAVGCTLSVWVAVVAWILAW).

Belongs to the major facilitator superfamily.

Its subcellular location is the vacuole membrane. Its function is as follows. Probable transporter. The polypeptide is Probable transporter mch1 (mch1) (Aspergillus fumigatus (strain ATCC MYA-4609 / CBS 101355 / FGSC A1100 / Af293) (Neosartorya fumigata)).